Consider the following 193-residue polypeptide: Threonylcarbamoyl-AMP synthase (193 aa).

Positions 14-193 (SRLQQRARKQ…IDLESGRVLR (180 aa)) constitute a YrdC-like domain.

Belongs to the SUA5 family. TsaC subfamily.

The protein resides in the cytoplasm. The catalysed reaction is L-threonine + hydrogencarbonate + ATP = L-threonylcarbamoyladenylate + diphosphate + H2O. Functionally, required for the formation of a threonylcarbamoyl group on adenosine at position 37 (t(6)A37) in tRNAs that read codons beginning with adenine. Catalyzes the conversion of L-threonine, HCO(3)(-)/CO(2) and ATP to give threonylcarbamoyl-AMP (TC-AMP) as the acyladenylate intermediate, with the release of diphosphate. This is Threonylcarbamoyl-AMP synthase from Chromobacterium violaceum (strain ATCC 12472 / DSM 30191 / JCM 1249 / CCUG 213 / NBRC 12614 / NCIMB 9131 / NCTC 9757 / MK).